The following is a 176-amino-acid chain: Small ribosomal subunit protein bS6 (176 aa).

The interval Asp-97–Glu-176 is disordered. Low complexity predominate over residues Ala-140 to Val-160. Residues Asp-161–Glu-176 are compositionally biased toward acidic residues.

This sequence belongs to the bacterial ribosomal protein bS6 family.

Its function is as follows. Binds together with bS18 to 16S ribosomal RNA. The polypeptide is Small ribosomal subunit protein bS6 (Gloeothece citriformis (strain PCC 7424) (Cyanothece sp. (strain PCC 7424))).